A 541-amino-acid polypeptide reads, in one-letter code: Chaperonin GroEL 2 (541 aa).

ATP is bound by residues 29–32 (TLGP), 86–90 (DGTTT), Gly413, 476–478 (NAA), and Asp492.

This sequence belongs to the chaperonin (HSP60) family. Forms a cylinder of 14 subunits composed of two heptameric rings stacked back-to-back. Interacts with the co-chaperonin GroES.

The protein localises to the cytoplasm. The enzyme catalyses ATP + H2O + a folded polypeptide = ADP + phosphate + an unfolded polypeptide.. In terms of biological role, together with its co-chaperonin GroES, plays an essential role in assisting protein folding. The GroEL-GroES system forms a nano-cage that allows encapsulation of the non-native substrate proteins and provides a physical environment optimized to promote and accelerate protein folding. The protein is Chaperonin GroEL 2 of Streptomyces coelicolor (strain ATCC BAA-471 / A3(2) / M145).